Reading from the N-terminus, the 102-residue chain is Small ribosomal subunit protein uS10 (102 aa).

Belongs to the universal ribosomal protein uS10 family. In terms of assembly, part of the 30S ribosomal subunit.

Involved in the binding of tRNA to the ribosomes. This chain is Small ribosomal subunit protein uS10, found in Paracoccus denitrificans (strain Pd 1222).